The sequence spans 49 residues: L-amino-acid oxidase (49 aa).

43–44 (MS) is a binding site for FAD.

The protein belongs to the flavin monoamine oxidase family. FIG1 subfamily. As to quaternary structure, homodimer; non-covalently linked. The cofactor is FAD. Post-translationally, N-glycosylated. As to expression, expressed by the venom gland.

The protein resides in the secreted. It carries out the reaction an L-alpha-amino acid + O2 + H2O = a 2-oxocarboxylate + H2O2 + NH4(+). The catalysed reaction is L-leucine + O2 + H2O = 4-methyl-2-oxopentanoate + H2O2 + NH4(+). In terms of biological role, catalyzes an oxidative deamination of predominantly hydrophobic and aromatic L-amino acids, thus producing hydrogen peroxide that may contribute to the diverse toxic effects of this enzyme. Shows activity on L-Leu. Exhibits diverse biological activities, such as hemorrhage, hemolysis, edema, antibacterial and antiparasitic activities, as well as regulation of platelet aggregation. Its effect on platelets is controversial, since it either induces aggregation or inhibits agonist-induced aggregation. These different effects are probably due to different experimental conditions. In addition, this protein induces apoptosis and necrosis and has inhibitory effects on rat kidney function (decrease of blood flow and glomerular filtration). The sequence is that of L-amino-acid oxidase from Bothrops insularis (Golden lancehead).